The following is a 75-amino-acid chain: Putative UPF0377 protein YJL222W-A (75 aa).

It belongs to the UPF0377 family.

The polypeptide is Putative UPF0377 protein YJL222W-A (Saccharomyces cerevisiae (strain ATCC 204508 / S288c) (Baker's yeast)).